The chain runs to 367 residues: DNA replication and repair protein RecF (367 aa).

30–37 is a binding site for ATP; that stretch reads GANGSGKT.

Belongs to the RecF family.

The protein resides in the cytoplasm. The RecF protein is involved in DNA metabolism; it is required for DNA replication and normal SOS inducibility. RecF binds preferentially to single-stranded, linear DNA. It also seems to bind ATP. In Pseudomonas syringae pv. syringae (strain B728a), this protein is DNA replication and repair protein RecF.